The primary structure comprises 430 residues: MHDIRAIRETPAAFDAALALRGLSAASADILAIDEARRAAITQAETAQADRNAASKEVGKAKASGDEAEFERLRALVSTKKDEIARLDEEAKAKDAELTAILEALPNLPSPDVPAGADEDDNVEQHRRGTPRAFDFKPLEHFDIPGIAASMDFETAAKLSGARFVTLKGAVARVHRALAQFMLDTHTEENGLTEINAPVLVRDETMYGTGQLPKFAEDSYQTTNGWWLIPTSEVTLTSLDSGNIVDEATLPHRYAAHSLCFRSEAGSAGRDTAGMLRQHQFEKVEMVSVTHPDQSNAEQQRMLACAEGILDKLEIPYRTVLLCAGDMGFGATRTYDIEAWLPGQDTYREISSVSTCGAFQARRMNARFKPSDGGKPEFVHTLNGSGLAVGRCLIAVLENGQNADGSVTLPAALHPWLGGKTRITAEGNLA.

L-serine is bound at residue 231 to 233; that stretch reads TSE. Position 262–264 (262–264) interacts with ATP; that stretch reads RSE. Residue E285 participates in L-serine binding. An ATP-binding site is contributed by 349-352; that stretch reads EISS. Residue S385 participates in L-serine binding.

It belongs to the class-II aminoacyl-tRNA synthetase family. Type-1 seryl-tRNA synthetase subfamily. As to quaternary structure, homodimer. The tRNA molecule binds across the dimer.

It localises to the cytoplasm. It catalyses the reaction tRNA(Ser) + L-serine + ATP = L-seryl-tRNA(Ser) + AMP + diphosphate + H(+). The catalysed reaction is tRNA(Sec) + L-serine + ATP = L-seryl-tRNA(Sec) + AMP + diphosphate + H(+). Its pathway is aminoacyl-tRNA biosynthesis; selenocysteinyl-tRNA(Sec) biosynthesis; L-seryl-tRNA(Sec) from L-serine and tRNA(Sec): step 1/1. Functionally, catalyzes the attachment of serine to tRNA(Ser). Is also able to aminoacylate tRNA(Sec) with serine, to form the misacylated tRNA L-seryl-tRNA(Sec), which will be further converted into selenocysteinyl-tRNA(Sec). The sequence is that of Serine--tRNA ligase from Jannaschia sp. (strain CCS1).